A 130-amino-acid polypeptide reads, in one-letter code: Large ribosomal subunit protein bL19 (130 aa).

Belongs to the bacterial ribosomal protein bL19 family.

In terms of biological role, this protein is located at the 30S-50S ribosomal subunit interface and may play a role in the structure and function of the aminoacyl-tRNA binding site. This chain is Large ribosomal subunit protein bL19, found in Cupriavidus metallidurans (strain ATCC 43123 / DSM 2839 / NBRC 102507 / CH34) (Ralstonia metallidurans).